The chain runs to 329 residues: Ankyrin repeat and SOCS box protein 5 (329 aa).

ANK repeat units follow at residues 69–98 (ADRS…NVNA), 102–131 (DHVT…NVNA), 135–164 (DGVT…KPQL), 167–196 (CLPS…DVDQ), 200–229 (HLGT…DVQK), and 232–261 (YWDT…DINA). Residues 278-329 (LVERLLLQHEATPSSLCQLCRLCIRNYIGRPRLHLIPQLQLPTLLQNFLQYR) form the SOCS box domain.

This sequence belongs to the ankyrin SOCS box (ASB) family.

The protein operates within protein modification; protein ubiquitination. In terms of biological role, may be a substrate-recognition component of a SCF-like ECS (Elongin-Cullin-SOCS-box protein) E3 ubiquitin-protein ligase complex which mediates the ubiquitination and subsequent proteasomal degradation of target proteins. May play a role in the initiation of arteriogenesis. The polypeptide is Ankyrin repeat and SOCS box protein 5 (ASB5) (Bos taurus (Bovine)).